Consider the following 241-residue polypeptide: Carboxy-S-adenosyl-L-methionine synthase (241 aa).

S-adenosyl-L-methionine-binding positions include Tyr38, Gly63–Ser65, Asp88–Asn89, Asp116–Ile117, Asn131, and Arg198.

The protein belongs to the class I-like SAM-binding methyltransferase superfamily. Cx-SAM synthase family. Homodimer.

It carries out the reaction prephenate + S-adenosyl-L-methionine = carboxy-S-adenosyl-L-methionine + 3-phenylpyruvate + H2O. Catalyzes the conversion of S-adenosyl-L-methionine (SAM) to carboxy-S-adenosyl-L-methionine (Cx-SAM). This Actinobacillus succinogenes (strain ATCC 55618 / DSM 22257 / CCUG 43843 / 130Z) protein is Carboxy-S-adenosyl-L-methionine synthase.